The sequence spans 123 residues: Steroid Delta-isomerase (123 aa).

Tyr12 functions as the Proton donor in the catalytic mechanism. Residue Asp36 is the Proton acceptor of the active site. Asp96 is a binding site for substrate.

In terms of assembly, homodimer.

The catalysed reaction is a 3-oxo-Delta(5)-steroid = a 3-oxo-Delta(4)-steroid. This Nocardioides simplex (Arthrobacter simplex) protein is Steroid Delta-isomerase (ksdI).